We begin with the raw amino-acid sequence, 359 residues long: Src kinase-associated phosphoprotein 1 (359 aa).

The 104-residue stretch at 107 to 210 (NVIKQGYLEK…WVDQISFLLK (104 aa)) folds into the PH domain. Residues tyrosine 142, tyrosine 219, and tyrosine 232 each carry the phosphotyrosine modification. Over residues 219–237 (YEEDEEEEEKEETYDDIDG) the composition is skewed to acidic residues. The segment at 219 to 239 (YEEDEEEEEKEETYDDIDGFD) is disordered. 2 positions are modified to phosphotyrosine; by FYN: tyrosine 271 and tyrosine 295. The tract at residues 290 to 295 (RKGVDY) is interaction with FYB1. An SH3 domain is found at 294 to 355 (DYASYYQGLW…PKEYLTTAFE (62 aa)).

The protein belongs to the SKAP family. Homodimer. Interacts with FYN. Interacts with PTPRC. Interacts with GRB2 when phosphorylated on Tyr-271. Interacts with FYB1, which is required for SKAP2 protein stability. Part of a complex consisting of SKAP1, FYB1 and CLNK. Interacts with RASGRP1. Interacts with FYB2. Post-translationally, phosphorylated on tyrosines. Phosphorylation by FYN on Tyr-271 is required for GRB2 interaction. Phosphorylation by FYN on Tyr-295 abolishes interaction with FYB1. Tyr-232 is dephosphorylated by PTPRC. In terms of tissue distribution, highly expressed in thymocytes and peripheral blood lymphocytes. Also expressed in spleen cells and testis. Present in T-cells (at protein level).

The protein localises to the cytoplasm. It is found in the nucleus. It localises to the cell membrane. Functionally, positively regulates T-cell receptor signaling by enhancing the MAP kinase pathway. Required for optimal conjugation between T-cells and antigen-presenting cells by promoting the clustering of integrin ITGAL on the surface of T-cells. May be involved in high affinity immunoglobulin epsilon receptor signaling in mast cells. This Homo sapiens (Human) protein is Src kinase-associated phosphoprotein 1 (SKAP1).